The sequence spans 478 residues: Lysosome membrane protein 2 (478 aa).

Over 1–4 (MGRC) the chain is Cytoplasmic. A helical transmembrane segment spans residues 5–27 (CFYTAGTLSLLLLVTSVTLLVAR). Over 28–433 (VFQKAVDQTI…QLKSVINTTL (406 aa)) the chain is Lumenal. 4 N-linked (GlcNAc...) asparagine glycosylation sites follow: Asn-45, Asn-68, Asn-105, and Asn-122. The tract at residues 155-191 (LIEAMLKAYQQKLFVIHTVHELLWGYKDEILSLVHIF) is important for interaction with GBA1. 4 N-linked (GlcNAc...) asparagine glycosylation sites follow: Asn-206, Asn-224, Asn-249, and Asn-304. 2 cysteine pairs are disulfide-bonded: Cys-274–Cys-329 and Cys-312–Cys-318. 3 N-linked (GlcNAc...) asparagine glycosylation sites follow: Asn-325, Asn-412, and Asn-430. The helical transmembrane segment at 434–459 (VVTNIPYIIMALGVFFGLVFTWLACR) threads the bilayer. At 460-478 (GQGSMDEGTADERAPLIRT) the chain is on the cytoplasmic side.

The protein belongs to the CD36 family. Interacts with GBA1. In terms of processing, acylated by palmitic acid group(s). Post-translationally, heavily glycosylated. As to expression, detected in the extracts of brain, heart, lung, liver and kidney.

It is found in the lysosome membrane. In terms of biological role, acts as a lysosomal receptor for glucosylceramidase (GBA1) targeting. The polypeptide is Lysosome membrane protein 2 (Scarb2) (Mus musculus (Mouse)).